A 732-amino-acid polypeptide reads, in one-letter code: Elongation factor 2 (732 aa).

Positions 19-260 (ERIRNIGIAA…MVVRHLPSPI (242 aa)) constitute a tr-type G domain. GTP is bound by residues 28-35 (AHIDHGKT), 94-98 (DTPGH), and 148-151 (NKVD). The residue at position 597 (H597) is a Diphthamide.

This sequence belongs to the TRAFAC class translation factor GTPase superfamily. Classic translation factor GTPase family. EF-G/EF-2 subfamily.

The protein localises to the cytoplasm. In terms of biological role, catalyzes the GTP-dependent ribosomal translocation step during translation elongation. During this step, the ribosome changes from the pre-translocational (PRE) to the post-translocational (POST) state as the newly formed A-site-bound peptidyl-tRNA and P-site-bound deacylated tRNA move to the P and E sites, respectively. Catalyzes the coordinated movement of the two tRNA molecules, the mRNA and conformational changes in the ribosome. The sequence is that of Elongation factor 2 (fusA) from Pyrococcus furiosus (strain ATCC 43587 / DSM 3638 / JCM 8422 / Vc1).